The chain runs to 49 residues: Delta-actitoxin-Axm1b (49 aa).

The well-structured region stretch occupies residues 1-7 (GVPCLCD). Cystine bridges form between C4–C46, C6–C36, and C29–C47. The segment at 8–17 (SDGPRPRGNT) is arg-14 loop (non-well-structured region). Residues 18 to 49 (LSGILWFYPSGCPSGWHNCKAHGPNIGWCCKK) are well-structured region.

Belongs to the sea anemone sodium channel inhibitory toxin family. Type I subfamily.

Its subcellular location is the secreted. The protein localises to the nematocyst. In terms of biological role, binds specifically to voltage-gated sodium channels (Nav) (site 3), thereby delaying their inactivation. This toxin has the highest affinity of all anemone toxins for the mammalian sodium channel, whereas its paralog Anthopleurin-A retains the greatest capacity to discriminate between cardiac (Nav1.5/SCN5A) and neuronal sodium channels. When tested electrophysiologically, this toxin exhibits a high affinity for multiple sodium channels with a 50-fold preference for rat cardiac (Nav1.5/SCN5A) over neuronal channels (0.1 nM versus 5 nM). When tested by ion flux, the affinities are similar and appear to have higher affinity (9 nM versus 22 nM). The residue Lys-37 of this toxin has been shown to interact with channel Nav1.5 (residue Asp-1612 in rat and Asp-1610 in human), which is located in the DIV S3-S4 linker (corresponding to channel site 3). Selectively modifies sodium channel inactivation from the open state with little effect on channel activation or on inactivation from closed states. Does not display phospholipid-binding activities, suggesting that the domain IV S3-S4 linker is located at the extracellular surface and not buried in the phospholipid bilayer. The sequence is that of Delta-actitoxin-Axm1b from Anthopleura xanthogrammica (Giant green sea anemone).